Here is a 332-residue protein sequence, read N- to C-terminus: D-lactate dehydrogenase (332 aa).

NAD(+) is bound by residues 155–156 (RI), Asp-175, 206–207 (VP), Asn-212, 233–235 (FAR), and Asp-259. Residue Arg-235 is part of the active site. The active site involves Glu-264. The active-site Proton donor is His-296.

This sequence belongs to the D-isomer specific 2-hydroxyacid dehydrogenase family.

It carries out the reaction (R)-lactate + NAD(+) = pyruvate + NADH + H(+). The polypeptide is D-lactate dehydrogenase (ldhD) (Lactiplantibacillus plantarum (strain ATCC BAA-793 / NCIMB 8826 / WCFS1) (Lactobacillus plantarum)).